Reading from the N-terminus, the 608-residue chain is Prolactin receptor (608 aa).

The first 19 residues, 1–19, serve as a signal peptide directing secretion; it reads MSSALAYMLLVLSISLLNG. At 20 to 229 the chain is on the extracellular side; that stretch reads QSPPGKPEIH…EIPNDFTLKD (210 aa). 2 consecutive Fibronectin type-III domains span residues 22–122 and 124–224; these read PPGK…IVEP and PPRN…IPND. Cysteines 31 and 41 form a disulfide. N-linked (GlcNAc...) asparagine glycosylation is present at N54. A disulfide bridge links C70 with C81. N-linked (GlcNAc...) asparagine glycans are attached at residues N99 and N127. Zn(2+) is bound by residues D206 and H207. Positions 210 to 214 match the WSXWS motif motif; the sequence is WSRWG. A helical transmembrane segment spans residues 230 to 253; it reads TTVWIIVAVLSAVICLIMVWAVAL. Over 254-608 the chain is Cytoplasmic; the sequence is KGYSMMTCIF…DPTCFMHSFH (355 aa). The Box 1 motif motif lies at 262–270; it reads IFPPVPGPK. Disordered stretches follow at residues 317 to 355, 377 to 419, and 466 to 487; these read DERLMPSHSKEYPGQGVKPTHLDPDSDSGHGSYDSHSLL, KPEN…TRRS, and GAKSFPSDKQNTSWPPLQEKGP. A compositionally biased stretch (basic and acidic residues) spans 318–327; it reads ERLMPSHSKE. Residues 345-354 are compositionally biased toward low complexity; that stretch reads GHGSYDSHSL. Residues 398 to 408 are compositionally biased toward polar residues; sequence CHTDTSKSTTW.

This sequence belongs to the type I cytokine receptor family. Type 1 subfamily. In terms of assembly, interacts with SMARCA1. Interacts with NEK3 and VAV2 and this interaction is prolactin-dependent.

The protein resides in the membrane. Functionally, this is a receptor for the anterior pituitary hormone prolactin. This chain is Prolactin receptor (Prlr), found in Mus musculus (Mouse).